The primary structure comprises 468 residues: ATP synthase subunit beta (468 aa).

ATP is bound at residue Gly155–Thr162.

This sequence belongs to the ATPase alpha/beta chains family. In terms of assembly, F-type ATPases have 2 components, CF(1) - the catalytic core - and CF(0) - the membrane proton channel. CF(1) has five subunits: alpha(3), beta(3), gamma(1), delta(1), epsilon(1). CF(0) has three main subunits: a(1), b(2) and c(9-12). The alpha and beta chains form an alternating ring which encloses part of the gamma chain. CF(1) is attached to CF(0) by a central stalk formed by the gamma and epsilon chains, while a peripheral stalk is formed by the delta and b chains.

The protein resides in the cell inner membrane. The catalysed reaction is ATP + H2O + 4 H(+)(in) = ADP + phosphate + 5 H(+)(out). In terms of biological role, produces ATP from ADP in the presence of a proton gradient across the membrane. The catalytic sites are hosted primarily by the beta subunits. This chain is ATP synthase subunit beta, found in Thermotoga petrophila (strain ATCC BAA-488 / DSM 13995 / JCM 10881 / RKU-1).